The primary structure comprises 158 residues: Small ribosomal subunit protein uS19 (158 aa).

It belongs to the universal ribosomal protein uS19 family.

In terms of biological role, protein S19 forms a complex with S13 that binds strongly to the 16S ribosomal RNA. This is Small ribosomal subunit protein uS19 from Pyrobaculum calidifontis (strain DSM 21063 / JCM 11548 / VA1).